A 255-amino-acid polypeptide reads, in one-letter code: Small ribosomal subunit protein eS4 (255 aa).

In terms of domain architecture, S4 RNA-binding spans 44–107 (IPLLILVRDV…DEYYRMIPYP (64 aa)).

It belongs to the eukaryotic ribosomal protein eS4 family.

The polypeptide is Small ribosomal subunit protein eS4 (Ignicoccus hospitalis (strain KIN4/I / DSM 18386 / JCM 14125)).